The primary structure comprises 449 residues: tRNA-2-methylthio-N(6)-dimethylallyladenosine synthase (449 aa).

The MTTase N-terminal domain maps to K2–R119. Residues C11, C47, C82, C157, C161, and C164 each coordinate [4Fe-4S] cluster. One can recognise a Radical SAM core domain in the interval E143–E378. One can recognise a TRAM domain in the interval A381–R443.

It belongs to the methylthiotransferase family. MiaB subfamily. As to quaternary structure, monomer. [4Fe-4S] cluster serves as cofactor.

The protein resides in the cytoplasm. It carries out the reaction N(6)-dimethylallyladenosine(37) in tRNA + (sulfur carrier)-SH + AH2 + 2 S-adenosyl-L-methionine = 2-methylsulfanyl-N(6)-dimethylallyladenosine(37) in tRNA + (sulfur carrier)-H + 5'-deoxyadenosine + L-methionine + A + S-adenosyl-L-homocysteine + 2 H(+). Its function is as follows. Catalyzes the methylthiolation of N6-(dimethylallyl)adenosine (i(6)A), leading to the formation of 2-methylthio-N6-(dimethylallyl)adenosine (ms(2)i(6)A) at position 37 in tRNAs that read codons beginning with uridine. This is tRNA-2-methylthio-N(6)-dimethylallyladenosine synthase from Hyphomonas neptunium (strain ATCC 15444).